The following is a 506-amino-acid chain: ATP synthase subunit alpha, chloroplastic (506 aa).

Residue 170–177 (GDRQTGKT) participates in ATP binding.

This sequence belongs to the ATPase alpha/beta chains family. F-type ATPases have 2 components, CF(1) - the catalytic core - and CF(0) - the membrane proton channel. CF(1) has five subunits: alpha(3), beta(3), gamma(1), delta(1), epsilon(1). CF(0) has four main subunits: a, b, b' and c.

The protein resides in the plastid. It is found in the chloroplast thylakoid membrane. It catalyses the reaction ATP + H2O + 4 H(+)(in) = ADP + phosphate + 5 H(+)(out). Its function is as follows. Produces ATP from ADP in the presence of a proton gradient across the membrane. The alpha chain is a regulatory subunit. The chain is ATP synthase subunit alpha, chloroplastic from Chlorella vulgaris (Green alga).